We begin with the raw amino-acid sequence, 373 residues long: MSEKKINLLDLDLPGLKALLTEMGEKPFRAQQIMQWIYHFGVSDFEQMTNINKAMRAKLAARCEIVAPEITSYQKSSDGTIKFAINVGQGQEVETVYIPEDDRATLCVSSQVGCALECTFCSTAQQGFNRNLTVSEIVGQIWRVSHFLGFQKETGERPISNVVMMGMGEPLLNLANVVPAMNIMLDDYGFGLSKRRVTLSTSGVVPALDKLGDVIDVALAVSIHAPNDELRDVLVPINKKYPLQEFLAAIRRYLEKSNANRGRVTLEYVMLDHINDSTDQAHELAKLMKDTPCKINLIPFNPYPGSPYGRSSNSRIDRFAKVLMEYDLTVIVRKTRGDDIDAACGQLAGDIRDRTKRLAKKRMQESQISVTMN.

The active-site Proton acceptor is the E94. The Radical SAM core domain occupies 100-339 (EDDRATLCVS…VIVRKTRGDD (240 aa)). The cysteines at positions 107 and 344 are disulfide-linked. [4Fe-4S] cluster is bound by residues C114, C118, and C121. S-adenosyl-L-methionine contacts are provided by residues 168-169 (GE), S200, 222-224 (SIH), and N301. C344 serves as the catalytic S-methylcysteine intermediate.

It belongs to the radical SAM superfamily. RlmN family. [4Fe-4S] cluster serves as cofactor.

The protein localises to the cytoplasm. The enzyme catalyses adenosine(2503) in 23S rRNA + 2 reduced [2Fe-2S]-[ferredoxin] + 2 S-adenosyl-L-methionine = 2-methyladenosine(2503) in 23S rRNA + 5'-deoxyadenosine + L-methionine + 2 oxidized [2Fe-2S]-[ferredoxin] + S-adenosyl-L-homocysteine. The catalysed reaction is adenosine(37) in tRNA + 2 reduced [2Fe-2S]-[ferredoxin] + 2 S-adenosyl-L-methionine = 2-methyladenosine(37) in tRNA + 5'-deoxyadenosine + L-methionine + 2 oxidized [2Fe-2S]-[ferredoxin] + S-adenosyl-L-homocysteine. Functionally, specifically methylates position 2 of adenine 2503 in 23S rRNA and position 2 of adenine 37 in tRNAs. m2A2503 modification seems to play a crucial role in the proofreading step occurring at the peptidyl transferase center and thus would serve to optimize ribosomal fidelity. The chain is Dual-specificity RNA methyltransferase RlmN from Shewanella amazonensis (strain ATCC BAA-1098 / SB2B).